A 170-amino-acid chain; its full sequence is Prenyl-diphosphate phosphatase (170 aa).

In terms of domain architecture, Nudix hydrolase spans 25 to 155; it reads HIHRASQLIL…PGNYTPALRE (131 aa). Positions 59-83 match the Nudix box motif; that stretch reads YSVSGTVADESYEACIAREMLEEIG. Mg(2+) contacts are provided by glutamate 77 and glutamate 81.

This sequence belongs to the Nudix hydrolase family. Requires Mg(2+) as cofactor.

The enzyme catalyses dimethylallyl diphosphate + H2O = dimethylallyl phosphate + phosphate + H(+). It catalyses the reaction isopentenyl diphosphate + H2O = isopentenyl phosphate + phosphate + H(+). It carries out the reaction (2E,6E)-farnesyl diphosphate + H2O = (2E,6E)-farnesyl phosphate + phosphate + H(+). The catalysed reaction is (2E)-geranyl diphosphate + H2O = (2E)-geranyl phosphate + phosphate + H(+). Its pathway is isoprenoid biosynthesis. In terms of biological role, hydrolyzes homoallylic isopentenyl diphosphate (IPP), its allylic isomer dimethylallyl diphosphate (DMAPP) and short-chain prenyl diphosphates geranyl diphosphate (GPP) and farnesyl diphosphate (FPP) to their corresponding monophosphate forms with high activity. The preferred substrate is IPP. ADP, NADPH, Ap5A and thiamine diphosphate (TPP) are weakly hydrolyzed. No hydrolysis with ATP, dNTPs, 8-OH-dGTP, NAD+, FAD or acetyl-CoA. The likely physiological role of this enzyme is to provide a substrate dimethylallyl phosphate (DMAP) for prenylated flavin mononucleotide (prenyl-FMN) synthase MM_1871 involved in the biosynthesis of prenyl-FMN, a coenzyme required in the archaea-specific mevalonate pathway. In Methanosarcina mazei (strain ATCC BAA-159 / DSM 3647 / Goe1 / Go1 / JCM 11833 / OCM 88) (Methanosarcina frisia), this protein is Prenyl-diphosphate phosphatase.